The chain runs to 754 residues: MKNSIISYPRIGANRELKFAIEKYFKNQSSKEELLKSAKDLRIRHWQEIQKAGIDFIPSNDFSLYDNVLDAAVLFNIVHTKYKNLNLDALDEYFAQSRGYQGENGDVTALAMKKWFNTNYHYLVPECDNADIIALTGDKIFKEYLEAKELGIESKPVLIGIFTLFKLIAFKDEKTQKLAKEKLLNAYIELFDKLNELKVTWLELDEPYLVYDLSKEDIALFEEFYQELLNHKKDLKILLQSYFGDLRDIYPKLLESKFDALGLDFIEGKQSLALIQKYGFAKDKILFAGLINGKNIYANDYAKSLKLIKELQKYTQNIVLNTSCSLLHVPYSTEFESKLDSSYLKLFAFAKEKLQELKDLKEILNSSEENPLFRANQELFKNIPERLDEKVKARLKALKKEDFTRTPSFKERALIQKEFLKLPLLPTTTIGSFPQSTDVRSNRLAFKQEKISAQNYTEFNQQKIKECIQIQEEIGLDVLVHGEFERNDMVEYFGENLKGFLFTQNGWVQSYGTRCVKPPVIWGDVSRTKPITLAWSKFAQSLSQKIVKGMLTGPVTILNWSFPREDISLKESTEQIALAIRDEVLDLENAGIKIIQIDEAALREKLPLRKSDWHSEYLDWAIPAFNLVHSGVKAKTQIHTHMCYSEFGDILKEIDAMDADVISFEASRSNLSLLDTLKAIRFKTEVGPGVYDIHSPRVPSVEELSLTIEKILNKLPKEQIWINPDCGLKTRAYEEVIASLKNLVTATQKIREQL.

Residues 15 to 18 (RELK) and Lys114 contribute to the 5-methyltetrahydropteroyltri-L-glutamate site. L-homocysteine is bound by residues 430–432 (IGS) and Glu483. L-methionine contacts are provided by residues 430-432 (IGS) and Glu483. Residues 514-515 (RC) and Trp560 each bind 5-methyltetrahydropteroyltri-L-glutamate. Asp598 serves as a coordination point for L-homocysteine. An L-methionine-binding site is contributed by Asp598. Glu604 serves as a coordination point for 5-methyltetrahydropteroyltri-L-glutamate. Zn(2+) is bound by residues His641, Cys643, and Glu665. His694 serves as the catalytic Proton donor. Cys726 serves as a coordination point for Zn(2+).

It belongs to the vitamin-B12 independent methionine synthase family. Zn(2+) is required as a cofactor.

It carries out the reaction 5-methyltetrahydropteroyltri-L-glutamate + L-homocysteine = tetrahydropteroyltri-L-glutamate + L-methionine. Its pathway is amino-acid biosynthesis; L-methionine biosynthesis via de novo pathway; L-methionine from L-homocysteine (MetE route): step 1/1. Catalyzes the transfer of a methyl group from 5-methyltetrahydrofolate to homocysteine resulting in methionine formation. This Campylobacter jejuni subsp. jejuni serotype O:23/36 (strain 81-176) protein is 5-methyltetrahydropteroyltriglutamate--homocysteine methyltransferase.